The sequence spans 699 residues: Elongation factor G (699 aa).

Positions 8–288 constitute a tr-type G domain; the sequence is EDYRNFGIMA…AVVDYLPSPM (281 aa). Residues 17-24, 86-90, and 140-143 contribute to the GTP site; these read AHIDAGKT, DTPGH, and NKMD.

This sequence belongs to the TRAFAC class translation factor GTPase superfamily. Classic translation factor GTPase family. EF-G/EF-2 subfamily.

The protein resides in the cytoplasm. Catalyzes the GTP-dependent ribosomal translocation step during translation elongation. During this step, the ribosome changes from the pre-translocational (PRE) to the post-translocational (POST) state as the newly formed A-site-bound peptidyl-tRNA and P-site-bound deacylated tRNA move to the P and E sites, respectively. Catalyzes the coordinated movement of the two tRNA molecules, the mRNA and conformational changes in the ribosome. In Rhizobium leguminosarum bv. trifolii (strain WSM2304), this protein is Elongation factor G.